We begin with the raw amino-acid sequence, 511 residues long: Histidine ammonia-lyase (511 aa).

The 5-imidazolinone (Ala-Gly) cross-link spans 144–146; the sequence is ASG. Ser-145 carries the post-translational modification 2,3-didehydroalanine (Ser).

It belongs to the PAL/histidase family. Contains an active site 4-methylidene-imidazol-5-one (MIO), which is formed autocatalytically by cyclization and dehydration of residues Ala-Ser-Gly.

Its subcellular location is the cytoplasm. The enzyme catalyses L-histidine = trans-urocanate + NH4(+). It participates in amino-acid degradation; L-histidine degradation into L-glutamate; N-formimidoyl-L-glutamate from L-histidine: step 1/3. The chain is Histidine ammonia-lyase from Halalkalibacterium halodurans (strain ATCC BAA-125 / DSM 18197 / FERM 7344 / JCM 9153 / C-125) (Bacillus halodurans).